We begin with the raw amino-acid sequence, 127 residues long: Trefoil factor 2 (127 aa).

The first 21 residues, 1–21, serve as a signal peptide directing secretion; it reads EPQRPAPGHPPPAGAVCLTGA. Position 22 is a pyrrolidone carboxylic acid (glutamine 22). P-type domains follow at residues 27–71 and 77–120; these read CRCS…FKPL and EECV…FFPM. Intrachain disulfides connect cysteine 27/cysteine 125, cysteine 29/cysteine 56, cysteine 40/cysteine 55, cysteine 50/cysteine 67, cysteine 79/cysteine 105, cysteine 89/cysteine 104, and cysteine 99/cysteine 116.

Found in pancreas.

Its subcellular location is the secreted. Functionally, inhibits gastrointestinal motility and gastric acid secretion. Could function as a structural component of gastric mucus, possibly by stabilizing glycoproteins in the mucus gel through interactions with carbohydrate side chains. The protein is Trefoil factor 2 (TFF2) of Sus scrofa (Pig).